We begin with the raw amino-acid sequence, 466 residues long: Ribulose bisphosphate carboxylase large chain (466 aa).

K5 bears the N6,N6,N6-trimethyllysine mark. N114 and T164 together coordinate substrate. K166 acts as the Proton acceptor in catalysis. K168 contributes to the substrate binding site. Mg(2+) is bound by residues K192, D194, and E195. An N6-carboxylysine modification is found at K192. H285 serves as the catalytic Proton acceptor. Substrate contacts are provided by R286, H318, and S370.

Belongs to the RuBisCO large chain family. Type I subfamily. As to quaternary structure, heterohexadecamer of 8 large chains and 8 small chains; disulfide-linked. The disulfide link is formed within the large subunit homodimers. Requires Mg(2+) as cofactor. Post-translationally, the disulfide bond which can form in the large chain dimeric partners within the hexadecamer appears to be associated with oxidative stress and protein turnover.

The protein localises to the plastid. It localises to the chloroplast. It catalyses the reaction 2 (2R)-3-phosphoglycerate + 2 H(+) = D-ribulose 1,5-bisphosphate + CO2 + H2O. The enzyme catalyses D-ribulose 1,5-bisphosphate + O2 = 2-phosphoglycolate + (2R)-3-phosphoglycerate + 2 H(+). Functionally, ruBisCO catalyzes two reactions: the carboxylation of D-ribulose 1,5-bisphosphate, the primary event in carbon dioxide fixation, as well as the oxidative fragmentation of the pentose substrate in the photorespiration process. Both reactions occur simultaneously and in competition at the same active site. This is Ribulose bisphosphate carboxylase large chain from Adenium obesum (Desert rose).